Consider the following 92-residue polypeptide: Small ribosomal subunit protein uS19 (92 aa).

This sequence belongs to the universal ribosomal protein uS19 family.

Functionally, protein S19 forms a complex with S13 that binds strongly to the 16S ribosomal RNA. This Nitrobacter winogradskyi (strain ATCC 25391 / DSM 10237 / CIP 104748 / NCIMB 11846 / Nb-255) protein is Small ribosomal subunit protein uS19.